We begin with the raw amino-acid sequence, 302 residues long: 4-hydroxy-tetrahydrodipicolinate synthase (302 aa).

Thr55 is a binding site for pyruvate. Tyr144 functions as the Proton donor/acceptor in the catalytic mechanism. Catalysis depends on Lys172, which acts as the Schiff-base intermediate with substrate. Val214 lines the pyruvate pocket.

This sequence belongs to the DapA family. Homotetramer; dimer of dimers.

It localises to the cytoplasm. It carries out the reaction L-aspartate 4-semialdehyde + pyruvate = (2S,4S)-4-hydroxy-2,3,4,5-tetrahydrodipicolinate + H2O + H(+). The protein operates within amino-acid biosynthesis; L-lysine biosynthesis via DAP pathway; (S)-tetrahydrodipicolinate from L-aspartate: step 3/4. Functionally, catalyzes the condensation of (S)-aspartate-beta-semialdehyde [(S)-ASA] and pyruvate to 4-hydroxy-tetrahydrodipicolinate (HTPA). This is 4-hydroxy-tetrahydrodipicolinate synthase from Synechococcus sp. (strain CC9311).